The chain runs to 1238 residues: Cullin-associated NEDD8-dissociated protein 1 (1238 aa).

HEAT repeat units lie at residues 41–78, 126–167, 171–208, 210–247, and 251–292; these read TYEN…RVKD, LVIK…KYGS, GDLE…PSPD, LFNS…SSGY, and KYLP…KCQK. Residues 315–354 form a disordered region; that stretch reads YSDDGEGEEDGDEEEEEMETSGDNDEEQEEEEEEEDLSDD. HEAT repeat units lie at residues 382-419, 432-469, 603-641, 646-683, 688-725, 853-890, 933-966, 967-1004, and 1008-1045; these read ELYQ…QLNK, QQVP…IIPG, EIQS…SSIN, SILP…VCPN, SLLT…NYSE, HENE…CSLQ, PFLQ…KLSM, IEPN…ENKE, and QYLA…NKPN.

This sequence belongs to the CAND family.

The protein resides in the nucleus. Functionally, key assembly factor of SCF (SKP1-CUL1-F-box protein) E3 ubiquitin ligase complexes that promotes the exchange of the substrate-recognition F-box subunit in SCF complexes, thereby playing a key role in the cellular repertoire of SCF complexes. Acts as a F-box protein exchange factor. This is Cullin-associated NEDD8-dissociated protein 1 (cand1) from Dictyostelium discoideum (Social amoeba).